A 341-amino-acid chain; its full sequence is MKNLVVFGTESHPKLTESICEHLCLDIGRVELSKFSNGETSVRIKQSVRGCDVYIVSPASGQVNDHLMELLIMISACKTASAKKVTAVLPVFPYSRQPDQKFSFSGAPLSDLQDAVVPCKKQTGYHPWIAQSGTLVADLLMCSGADHIITMDLHDPQFQGFFDIPVDNLFGRPLLKHYISLNIPNYHNAVIVSPDAGGAKRATAIADALGLDFALIHKNRRHEYGTSLMLVGDVQNKVAILIDDLIDTAYTLVRAAEFVKEHGASKIYALVTHCVLSGDAIERVKLSCIDKLIVTNTAPQTITPSGCFDIIDVAPTFAEAIRRIHNGESISILYDHNQVWV.

D152, H154, and D167 together coordinate Mg(2+).

Belongs to the ribose-phosphate pyrophosphokinase family.

The protein resides in the cytoplasm. The catalysed reaction is D-ribose 5-phosphate + ATP = 5-phospho-alpha-D-ribose 1-diphosphate + AMP + H(+). It functions in the pathway metabolic intermediate biosynthesis; 5-phospho-alpha-D-ribose 1-diphosphate biosynthesis; 5-phospho-alpha-D-ribose 1-diphosphate from D-ribose 5-phosphate (route I): step 1/1. In terms of biological role, 5-phosphoribose 1-diphosphate synthase involved in nucleotide, histidine, and tryptophan biosynthesis. Active in heteromultimeric complexes with other 5-phosphoribose 1-diphosphate synthases. This Schizosaccharomyces pombe (strain 972 / ATCC 24843) (Fission yeast) protein is Ribose-phosphate pyrophosphokinase 5.